We begin with the raw amino-acid sequence, 1748 residues long: Tight junction protein 1 (1748 aa).

A PDZ 1 domain is found at 23–110 (TVTLHRAPGF…NAKITIRRKK (88 aa)). A compositionally biased stretch (basic residues) spans 102–112 (AKITIRRKKKV). The interval 102–189 (AKITIRRKKK…QPAKPTKVTL (88 aa)) is disordered. Residues 123–136 (PVSDNEEDSYDEEI) show a composition bias toward acidic residues. The residue at position 125 (S125) is a Phosphoserine. At Y132 the chain carries Phosphotyrosine. The segment covering 149–175 (RRSEKIWPRDRSASRERSLSPRSDRRS) has biased composition (basic and acidic residues). A phosphoserine mark is found at S175, S178, and S179. A Phosphothreonine modification is found at T185. The PDZ 2 domain maps to 186–264 (KVTLVKSRKN…KLKMVVQRDE (79 aa)). Phosphoserine is present on residues S212 and S241. T267 carries the phosphothreonine modification. Phosphoserine occurs at positions 275, 277, 280, 284, 290, 294, 297, 300, 323, 329, 334, 337, and 353. The disordered stretch occupies residues 295 to 396 (LASDHSGRSH…PVYAQVGQPD (102 aa)). Basic and acidic residues predominate over residues 299-327 (HSGRSHDRPPRRSRSRSPDQRSEPSDHSR). A compositionally biased stretch (polar residues) spans 329 to 338 (SPQQPSNGSL). T354 carries the phosphothreonine modification. The segment covering 357–377 (KHADDHTPKTVEEVTVERNEK) has biased composition (basic and acidic residues). Residues 421 to 502 (SMKLVKFRKG…GEEVTILAQK (82 aa)) form the PDZ 3 domain. Residues 516 to 584 (GDSFYIRTHF…PNKNRAEQLA (69 aa)) enclose the SH3 domain. A Guanylate kinase-like domain is found at 598–779 (RADFWRFRGL…TTTINLNSMN (182 aa)). A phosphoserine mark is found at S617 and S622. The segment at 633-876 (YERVVLREAG…GTPPESAITR (244 aa)) is occludin (OCLN)-binding region. T809 carries the post-translational modification Phosphothreonine. Residues S810 and S821 each carry the phosphoserine modification. Residue Y822 is modified to Phosphotyrosine. Phosphoserine is present on residues S824, S828, and S837. Disordered stretches follow at residues 825 to 1081 (APGS…LRYE) and 1095 to 1587 (DDKQ…PEFD). Phosphothreonine is present on residues T846, T848, T854, T861, and T868. The segment covering 879–892 (EPVREDSSGMHHEN) has biased composition (basic and acidic residues). Residues 893-906 (QTYPPYSPQAQPQP) show a composition bias toward low complexity. S912 carries the phosphoserine modification. Composition is skewed to polar residues over residues 934-953 (PETN…NLTN) and 963-979 (PSTS…TPST). A Phosphoserine modification is found at S968. A compositionally biased stretch (basic and acidic residues) spans 998-1014 (DPTKVYRKDPYPEEMMR). Over residues 1061–1072 (YESSSYTDQFSR) the composition is skewed to polar residues. Residues S1071, S1111, and S1139 each carry the phosphoserine modification. Residues 1110-1125 (HSQDLDSRQHPEESSE) are compositionally biased toward basic and acidic residues. Y1140 and Y1165 each carry phosphotyrosine. The segment at 1151–1371 (RASALRHEEQ…FDRRSFENKP (221 aa)) is actin-binding region (ABR). Composition is skewed to basic and acidic residues over residues 1269 to 1286 (KMFE…KDVN) and 1336 to 1347 (PPEDIVRSNHYD). Position 1354 is a phosphotyrosine (Y1354). S1366 carries the phosphoserine modification. The span at 1389–1400 (SQNQSNFSSYSS) shows a compositional bias: low complexity. A compositionally biased stretch (basic and acidic residues) spans 1403–1420 (KPPEADGVDRSFGEKRYE). At S1413 the chain carries Phosphoserine. 2 stretches are compositionally biased toward polar residues: residues 1459-1470 (NSVSLDFQNSLV) and 1512-1522 (GTEQTQKTVTP). Residues 1538–1547 (PFERKFESPK) are compositionally biased toward basic and acidic residues. A phosphoserine mark is found at S1545 and S1617. Positions 1634-1748 (ATARGIFNSN…NCVSVLIDHF (115 aa)) constitute a ZU5 domain.

This sequence belongs to the MAGUK family. Homodimer. Forms heterodimers TJP3. Forms a heterodimer (via PDZ2 domain) with TJP2/ZO2 (via PDZ2 domain). Interacts with OCLN, CALM, claudins, CGN/cingulin, CXADR, GJA12, GJD3 and UBN1. Interacts (via ZU5 domain) with CDC42BPB and MYZAP. Interacts (via PDZ domain) with GJA1. Interacts (via PDZ domains) with ANKRD2. Interacts with POPDC1 (via the C-terminus cytoplasmic tail). Interacts with HSPA4 and KIRREL1. Interacts with DLL1. Interacts with USP53 (via the C-terminal region). Interacts (via ABR region) with F-actin. Interacts with DNMBP (via C-terminal domain); required for the apical cell-cell junction localization of DNMBP. Interacts with SPEF1. Interacts (via N-terminus) with CTNNA1. Interacts with CLDN18. Interacts with CLDN16 (via TRV motif); this is a prerequisite for anchoring of CLDN16 at the tight junction. Interacts with PKP1; the interaction facilitates TJP1/ZO-1 localization to the plasma membrane. Interacts with PATJ (via PDZ1-6 domains); the interaction is required for attachment and extension of TJP1/ZO1 condensates along the apical cell interface. Post-translationally, phosphorylated at tyrosine redidues in response to epidermal growth factor (EGF). This response is dependent on an intact actin microfilament system. Dephosphorylated by PTPRJ. The alpha-containing isoform is found in most epithelial cell junctions. The short isoform is found both in endothelial cells and the highly specialized epithelial junctions of renal glomeruli and Sertoli cells of the seminiferous tubules.

It is found in the cell membrane. It localises to the cell junction. Its subcellular location is the tight junction. The protein localises to the gap junction. The protein resides in the cell projection. It is found in the podosome. TJP1, TJP2, and TJP3 are closely related scaffolding proteins that link tight junction (TJ) transmembrane proteins such as claudins, junctional adhesion molecules, and occludin to the actin cytoskeleton. Forms a multistranded TJP1/ZO1 condensate which elongates to form a tight junction belt, the belt is anchored at the apical cell membrane via interaction with PATJ. The tight junction acts to limit movement of substances through the paracellular space and as a boundary between the compositionally distinct apical and basolateral plasma membrane domains of epithelial and endothelial cells. Necessary for lumenogenesis, and particularly efficient epithelial polarization and barrier formation. Plays a role in the regulation of cell migration by targeting CDC42BPB to the leading edge of migrating cells. Plays an important role in podosome formation and associated function, thus regulating cell adhesion and matrix remodeling. With TJP2 and TJP3, participates in the junctional retention and stability of the transcription factor DBPA, but is not involved in its shuttling to the nucleus. May play a role in mediating cell morphology changes during ameloblast differentiation via its role in tight junctions. This Homo sapiens (Human) protein is Tight junction protein 1.